Reading from the N-terminus, the 95-residue chain is MRKYEVLYIIRPEVDEEARKALVERFNKVLTDNGGTVEKTTEMGKRRFAYEINDMREGFYVLLNVTAEPAATKELDRLMKISDDIVRLMITKDEK.

Belongs to the bacterial ribosomal protein bS6 family.

Functionally, binds together with bS18 to 16S ribosomal RNA. This chain is Small ribosomal subunit protein bS6, found in Exiguobacterium sibiricum (strain DSM 17290 / CCUG 55495 / CIP 109462 / JCM 13490 / 255-15).